We begin with the raw amino-acid sequence, 97 residues long: Protein Vpr (97 aa).

The segment at 1 to 42 (MEQAPEDQGPQREPYNEWTLELLEELKREAVRHFPRPWLHSL) is homooligomerization. Ser79, Ser95, and Ser97 each carry phosphoserine; by host.

Belongs to the HIV-1 VPR protein family. As to quaternary structure, homooligomer, may form homodimer. Interacts with p6-gag region of the Pr55 Gag precursor protein through a (Leu-X-X)4 motif near the C-terminus of the P6gag protein. Interacts with host UNG. May interact with host RAD23A/HHR23A. Interacts with host VPRBP/DCAF1, leading to hijack the CUL4A-RBX1-DDB1-DCAF1/VPRBP complex, mediating ubiquitination of host proteins such as TERT and ZGPAT and arrest of the cell cycle in G2 phase. Phosphorylated on several residues by host. These phosphorylations regulate VPR activity for the nuclear import of the HIV-1 pre-integration complex.

The protein resides in the virion. It is found in the host nucleus. It localises to the host extracellular space. In terms of biological role, during virus replication, may deplete host UNG protein, and incude G2-M cell cycle arrest. Acts by targeting specific host proteins for degradation by the 26S proteasome, through association with the cellular CUL4A-DDB1 E3 ligase complex by direct interaction with host VPRPB/DCAF-1. Cell cycle arrest reportedly occurs within hours of infection and is not blocked by antiviral agents, suggesting that it is initiated by the VPR carried into the virion. Additionally, VPR induces apoptosis in a cell cycle dependent manner suggesting that these two effects are mechanistically linked. Detected in the serum and cerebrospinal fluid of AIDS patient, VPR may also induce cell death to bystander cells. During virus entry, plays a role in the transport of the viral pre-integration (PIC) complex to the host nucleus. This function is crucial for viral infection of non-dividing macrophages. May act directly at the nuclear pore complex, by binding nucleoporins phenylalanine-glycine (FG)-repeat regions. This is Protein Vpr from Human immunodeficiency virus type 1 group M subtype B (isolate ARV2/SF2) (HIV-1).